A 197-amino-acid chain; its full sequence is Holliday junction branch migration complex subunit RuvA (197 aa).

A domain I region spans residues 1–64 (MIGRLRGIVA…EDSVSLYGFL (64 aa)). Residues 65–143 (REGERRLFRD…QFGAGGALPT (79 aa)) are domain II. Residues 144–153 (GSGPAPADPL) are flexible linker. The interval 153–197 (LSDATVALQQLGYKPAEAARMAREAFNEGDEVAIVIRKALQSALR) is domain III.

This sequence belongs to the RuvA family. Homotetramer. Forms an RuvA(8)-RuvB(12)-Holliday junction (HJ) complex. HJ DNA is sandwiched between 2 RuvA tetramers; dsDNA enters through RuvA and exits via RuvB. An RuvB hexamer assembles on each DNA strand where it exits the tetramer. Each RuvB hexamer is contacted by two RuvA subunits (via domain III) on 2 adjacent RuvB subunits; this complex drives branch migration. In the full resolvosome a probable DNA-RuvA(4)-RuvB(12)-RuvC(2) complex forms which resolves the HJ.

It localises to the cytoplasm. In terms of biological role, the RuvA-RuvB-RuvC complex processes Holliday junction (HJ) DNA during genetic recombination and DNA repair, while the RuvA-RuvB complex plays an important role in the rescue of blocked DNA replication forks via replication fork reversal (RFR). RuvA specifically binds to HJ cruciform DNA, conferring on it an open structure. The RuvB hexamer acts as an ATP-dependent pump, pulling dsDNA into and through the RuvAB complex. HJ branch migration allows RuvC to scan DNA until it finds its consensus sequence, where it cleaves and resolves the cruciform DNA. This is Holliday junction branch migration complex subunit RuvA from Stenotrophomonas maltophilia (strain R551-3).